The primary structure comprises 191 residues: Syndecan-2-A (191 aa).

An N-terminal signal peptide occupies residues 1 to 22; it reads MRNVWLIVPFALLAALSGETWA. The Extracellular portion of the chain corresponds to 23-137; the sequence is QADRDLYIDS…NLFHRTEVLA (115 aa). Positions 32 to 60 are disordered; sequence STESSGNYPVDDDDYSSGSGSGIPARGDD. Residues serine 36, serine 48, serine 50, and serine 52 are each glycosylated (O-linked (Xyl...) (glycosaminoglycan) serine). Residues 138–158 form a helical membrane-spanning segment; sequence AVIAGGGIGFLFAVFLILLLV. At 159 to 191 the chain is on the cytoplasmic side; sequence YRMRKKDEGSYDLGERKPSSAVYQKAPTKEFYA. Residues 168-191 form a disordered region; that stretch reads SYDLGERKPSSAVYQKAPTKEFYA.

This sequence belongs to the syndecan proteoglycan family. Post-translationally, O-glycosylated; contains both heparan sulfate and chondroitin sulfate.

The protein resides in the membrane. In terms of biological role, cell surface proteoglycan. The polypeptide is Syndecan-2-A (sdc2-a) (Xenopus laevis (African clawed frog)).